The following is a 336-amino-acid chain: Biotin synthase (336 aa).

A Radical SAM core domain is found at 54–281; the sequence is NAIQLSTLLS…KAMVRLSAGR (228 aa). 3 residues coordinate [4Fe-4S] cluster: C69, C73, and C76. [2Fe-2S] cluster contacts are provided by C113, C144, C204, and R276.

The protein belongs to the radical SAM superfamily. Biotin synthase family. In terms of assembly, homodimer. Requires [4Fe-4S] cluster as cofactor. [2Fe-2S] cluster serves as cofactor.

The catalysed reaction is (4R,5S)-dethiobiotin + (sulfur carrier)-SH + 2 reduced [2Fe-2S]-[ferredoxin] + 2 S-adenosyl-L-methionine = (sulfur carrier)-H + biotin + 2 5'-deoxyadenosine + 2 L-methionine + 2 oxidized [2Fe-2S]-[ferredoxin]. The protein operates within cofactor biosynthesis; biotin biosynthesis; biotin from 7,8-diaminononanoate: step 2/2. Catalyzes the conversion of dethiobiotin (DTB) to biotin by the insertion of a sulfur atom into dethiobiotin via a radical-based mechanism. The polypeptide is Biotin synthase (Burkholderia mallei (strain ATCC 23344)).